Reading from the N-terminus, the 292-residue chain is 33 kDa chaperonin (292 aa).

Intrachain disulfides connect Cys-230/Cys-232 and Cys-263/Cys-266.

It belongs to the HSP33 family. Post-translationally, under oxidizing conditions two disulfide bonds are formed involving the reactive cysteines. Under reducing conditions zinc is bound to the reactive cysteines and the protein is inactive.

Its subcellular location is the cytoplasm. Functionally, redox regulated molecular chaperone. Protects both thermally unfolding and oxidatively damaged proteins from irreversible aggregation. Plays an important role in the bacterial defense system toward oxidative stress. The protein is 33 kDa chaperonin of Salmonella typhimurium (strain LT2 / SGSC1412 / ATCC 700720).